We begin with the raw amino-acid sequence, 402 residues long: Speedy protein E21 (402 aa).

The segment at 1-90 is disordered; the sequence is MDRTETRFRK…EPEKELAPEP (90 aa). A compositionally biased stretch (polar residues) spans 16 to 39; the sequence is GKITTSRQLHPQNEQSPQRSTSGY. Acidic residues predominate over residues 76–90; sequence DESEEEPEKELAPEP.

It belongs to the Speedy/Ringo family.

The chain is Speedy protein E21 from Homo sapiens (Human).